The primary structure comprises 412 residues: 46 kDa FK506-binding nuclear protein (412 aa).

Composition is skewed to acidic residues over residues 95 to 113, 169 to 178, and 188 to 216; these read EEDL…EEEA, GEDIDTDEND, and EGDD…EEEE. Positions 95 to 304 are disordered; the sequence is EEDLEDEEEA…PVEKKEKKQI (210 aa). The span at 247–257 shows a compositional bias: basic residues; the sequence is KSQKRRLKKKL. A compositionally biased stretch (basic and acidic residues) spans 271-303; that stretch reads DKPKKEEPQQKAEKKKPEAKKEEAPVEKKEKKQ. A PPIase FKBP-type domain is found at 324-412; sequence GKVVMVYYEG…VFEVDLKNVK (89 aa).

The protein belongs to the FKBP-type PPIase family. Post-translationally, phosphorylated by a nuclear kinase in the presence of Mg(2+) and ATP.

The protein localises to the nucleus. The enzyme catalyses [protein]-peptidylproline (omega=180) = [protein]-peptidylproline (omega=0). With respect to regulation, inhibited by both FK506 and rapamycin. Functionally, PPIases accelerate the folding of proteins. It catalyzes the cis-trans isomerization of proline imidic peptide bonds in oligopeptides. Binds double-stranded DNA in vitro. In Spodoptera frugiperda (Fall armyworm), this protein is 46 kDa FK506-binding nuclear protein (FKBP46).